The chain runs to 356 residues: MKALVLAGGSGTRLRPITHTSAKQLVAVANKPVLFYGLEAIAAAGITDVGLIVGDTAGEVPRAVGDGAKFGLDITYIEQSRPLGLAHAVLIAHTYLGDDDFVMYLGDNFIVGGIDDLVRTFRDGRRPAARILLTHVSDPSGFGVAELDDDGRVVGLEEKPRHPKSDLALVGVYFFTPAIHEAVRAIEPSWRGELEITHAIQHLIDNGADIQSMVIEGYWKDTGNVADMLEVNRTVLEDLEPRIEGTVDEHTVVIGRVVVGEGARVTNSRIMGPAIIGAGPEISDSYIGPFTSVGDNCRITGSEMEFSIMLAESAITGVRRIEGSLIGRNVQVTQSLHAPNAHRFVLGDHSKVEIQS.

Mg(2+) contacts are provided by Asp107 and Asp221.

Belongs to the glucose-1-phosphate thymidylyltransferase family. Mg(2+) serves as cofactor.

The catalysed reaction is dTTP + alpha-D-glucose 1-phosphate + H(+) = dTDP-alpha-D-glucose + diphosphate. It functions in the pathway antibiotic biosynthesis. Involved in the biosynthesis of the two 2,6-deoxysugars, dTDP-L-oleandrose and dTDP-D-desosamine, attached to the macrolactone ring oleandolide to produce the aglycone antibiotic oleandomycin. Catalyzes the formation of dTDP-glucose from deoxythymidine triphosphate (dTTP) and glucose 1-phosphate. This is Glucose-1-phosphate thymidylyltransferase from Streptomyces antibioticus.